The chain runs to 729 residues: Polyphosphate kinase (729 aa).

A disordered region spans residues 1-46; the sequence is MTEAQTRTEPSESSESSEAVAPAITSAADSAPEAPPATTAPAIENP. The segment covering 25–42 has biased composition (low complexity); sequence TSAADSAPEAPPATTAPA. Asn-90 provides a ligand contact to ATP. 2 residues coordinate Mg(2+): Arg-422 and Arg-452. The Phosphohistidine intermediate role is filled by His-482. ATP is bound by residues Tyr-515, Arg-611, and His-639.

The protein belongs to the polyphosphate kinase 1 (PPK1) family. Requires Mg(2+) as cofactor. In terms of processing, an intermediate of this reaction is the autophosphorylated ppk in which a phosphate is covalently linked to a histidine residue through a N-P bond.

It catalyses the reaction [phosphate](n) + ATP = [phosphate](n+1) + ADP. Catalyzes the reversible transfer of the terminal phosphate of ATP to form a long-chain polyphosphate (polyP). This chain is Polyphosphate kinase, found in Mycolicibacterium gilvum (strain PYR-GCK) (Mycobacterium gilvum (strain PYR-GCK)).